Reading from the N-terminus, the 295-residue chain is 33 kDa chaperonin (295 aa).

Intrachain disulfides connect cysteine 237/cysteine 239 and cysteine 270/cysteine 273.

It belongs to the HSP33 family. In terms of processing, under oxidizing conditions two disulfide bonds are formed involving the reactive cysteines. Under reducing conditions zinc is bound to the reactive cysteines and the protein is inactive.

The protein localises to the cytoplasm. Its function is as follows. Redox regulated molecular chaperone. Protects both thermally unfolding and oxidatively damaged proteins from irreversible aggregation. Plays an important role in the bacterial defense system toward oxidative stress. This chain is 33 kDa chaperonin, found in Lactiplantibacillus plantarum (strain ATCC BAA-793 / NCIMB 8826 / WCFS1) (Lactobacillus plantarum).